We begin with the raw amino-acid sequence, 335 residues long: Biotin synthase (335 aa).

The 229-residue stretch at 41–269 (KQIQVCKLIS…TSDVRLSAGR (229 aa)) folds into the Radical SAM core domain. Cys-56, Cys-60, and Cys-63 together coordinate [4Fe-4S] cluster. [2Fe-2S] cluster-binding residues include Cys-100, Cys-132, Cys-192, and Arg-264.

This sequence belongs to the radical SAM superfamily. Biotin synthase family. As to quaternary structure, homodimer. Requires [4Fe-4S] cluster as cofactor. [2Fe-2S] cluster serves as cofactor.

It carries out the reaction (4R,5S)-dethiobiotin + (sulfur carrier)-SH + 2 reduced [2Fe-2S]-[ferredoxin] + 2 S-adenosyl-L-methionine = (sulfur carrier)-H + biotin + 2 5'-deoxyadenosine + 2 L-methionine + 2 oxidized [2Fe-2S]-[ferredoxin]. The protein operates within cofactor biosynthesis; biotin biosynthesis; biotin from 7,8-diaminononanoate: step 2/2. Functionally, catalyzes the conversion of dethiobiotin (DTB) to biotin by the insertion of a sulfur atom into dethiobiotin via a radical-based mechanism. The sequence is that of Biotin synthase from Nostoc sp. (strain PCC 7120 / SAG 25.82 / UTEX 2576).